The sequence spans 454 residues: GA-binding protein alpha chain (454 aa).

Residues 168–251 (AALEGYRKEQ…SHLELLRKYV (84 aa)) enclose the PNT domain. The disordered stretch occupies residues 297–316 (QRAPRISGEDRSSPGNRTGN). Phosphoserine is present on S303. The segment at residues 320–400 (IQLWQFLLEL…QGKRFVYKFV (81 aa)) is a DNA-binding region (ETS).

Belongs to the ETS family. Heterotetramer of two alpha and two beta subunits.

Its subcellular location is the nucleus. Its function is as follows. Transcription factor capable of interacting with purine rich repeats (GA repeats). Positively regulates transcription of transcriptional repressor RHIT/ZNF205. Functionally, (Microbial infection) Necessary for the expression of the Adenovirus E4 gene. This chain is GA-binding protein alpha chain (GABPA), found in Homo sapiens (Human).